Here is a 462-residue protein sequence, read N- to C-terminus: L-seryl-tRNA(Sec) selenium transferase (462 aa).

K294 bears the N6-(pyridoxal phosphate)lysine mark.

It belongs to the SelA family. As to quaternary structure, homodecamer; pentamer of dimers. Binds only one seryl-tRNA(Sec) per dimer. Pyridoxal 5'-phosphate is required as a cofactor.

It is found in the cytoplasm. The enzyme catalyses L-seryl-tRNA(Sec) + selenophosphate + H(+) = L-selenocysteinyl-tRNA(Sec) + phosphate. It participates in aminoacyl-tRNA biosynthesis; selenocysteinyl-tRNA(Sec) biosynthesis; selenocysteinyl-tRNA(Sec) from L-seryl-tRNA(Sec) (bacterial route): step 1/1. Its function is as follows. Converts seryl-tRNA(Sec) to selenocysteinyl-tRNA(Sec) required for selenoprotein biosynthesis. The sequence is that of L-seryl-tRNA(Sec) selenium transferase from Yersinia pestis bv. Antiqua (strain Antiqua).